The sequence spans 124 residues: Small ribosomal subunit protein uS12 (124 aa).

Residues 1–32 form a disordered region; the sequence is MPTIQQLVRKGRQAKTTKTKTPALKGSPQRRG. Over residues 9–18 the composition is skewed to basic residues; the sequence is RKGRQAKTTK. Asp-89 carries the post-translational modification 3-methylthioaspartic acid. The tract at residues 105–124 is disordered; that stretch reads QGVRNRKQARSRYGAKKEKS. Residues 108–118 are compositionally biased toward basic residues; it reads RNRKQARSRYG.

Belongs to the universal ribosomal protein uS12 family. As to quaternary structure, part of the 30S ribosomal subunit. Contacts proteins S8 and S17. May interact with IF1 in the 30S initiation complex.

In terms of biological role, with S4 and S5 plays an important role in translational accuracy. Its function is as follows. Interacts with and stabilizes bases of the 16S rRNA that are involved in tRNA selection in the A site and with the mRNA backbone. Located at the interface of the 30S and 50S subunits, it traverses the body of the 30S subunit contacting proteins on the other side and probably holding the rRNA structure together. The combined cluster of proteins S8, S12 and S17 appears to hold together the shoulder and platform of the 30S subunit. The polypeptide is Small ribosomal subunit protein uS12 (Salinispora arenicola (strain CNS-205)).